A 463-amino-acid chain; its full sequence is Proton-coupled folate transporter (463 aa).

Residues 1-27 are Cytoplasmic-facing; that stretch reads MVSPDDSPEIRDRPRPRRCLLPASVTV. A helical transmembrane segment spans residues 28 to 46; sequence EPVIFLSMFALALQGPLAT. The Extracellular segment spans residues 47–86; sequence QYLWDRLSADIGFNGTRTVGCAMNGSKSAGPEQQEVETLT. N-linked (GlcNAc...) asparagine glycans are attached at residues N60 and N70. Residues C67 and C302 are joined by a disulfide bond. The helical transmembrane segment at 87–112 threads the bilayer; that stretch reads AHWSLYINLGGFLVGLFSVMLLGPWS. The Cytoplasmic portion of the chain corresponds to 113-116; the sequence is DKVG. A helical membrane pass occupies residues 117–139; the sequence is RRPVLMLPCIGLALQAAVYLLVM. Residues 140 to 144 are Extracellular-facing; it reads YQELH. The helical transmembrane segment at 145 to 158 threads the bilayer; it reads VGYFLIGRFISGIS. The Cytoplasmic portion of the chain corresponds to 159-181; that stretch reads GDFNMILAGCFAYIADVSDRQSR. The H(+) site is built by D160 and E189. The chain crosses the membrane as a helical span at residues 182–207; it reads TFRVAVLEACLGIAGMVASIIGGHWR. Over 208–212 the chain is Extracellular; the sequence is KAQGY. The chain crosses the membrane as a helical span at residues 213–231; it reads INPFWLVFAVNLFTALYVY. The Cytoplasmic portion of the chain corresponds to 232 to 270; that stretch reads FCVEESVKDKKPARLFTHRHYQSFFRLFTVQGENNRRRK. Residues 271-293 traverse the membrane as a helical segment; the sequence is LFLYSLALLVVVTVHMGAKNLFV. H285 provides a ligand contact to H(+). Residues 294-306 are Extracellular-facing; it reads LYELSYPLCWDSD. Residues 307–329 traverse the membrane as a helical segment; sequence LIGYGSAAEHLTYLSSLAGLRLF. Topologically, residues 330–335 are cytoplasmic; it reads QLCLAD. Residues 336 to 355 traverse the membrane as a helical segment; the sequence is SWVAEMGFISNISGLVVISL. Over 356 to 359 the chain is Extracellular; it reads ASTT. The chain crosses the membrane as a helical span at residues 360–380; sequence PIMFTGYGLRFFAMATTPVIR. The Cytoplasmic portion of the chain corresponds to 381-392; sequence SKLSKMVEEGEQ. A helical transmembrane segment spans residues 393-418; the sequence is GALFSSVACVEGLSFLLATGLFNSLY. Over 419 to 426 the chain is Extracellular; that stretch reads PATLHFMK. The chain crosses the membrane as a helical span at residues 427–445; the sequence is GFPFLLGALLLLIPAGIIG. Topologically, residues 446-463 are cytoplasmic; that stretch reads LIEVCEQKPMYSQFSEIS.

This sequence belongs to the major facilitator superfamily. SLC46A family. Monomer.

It is found in the cell membrane. It localises to the apical cell membrane. Its subcellular location is the basolateral cell membrane. The protein resides in the endosome membrane. The protein localises to the cytoplasm. It catalyses the reaction folate(in) + H(+)(in) = folate(out) + H(+)(out). The catalysed reaction is (6S)-5-methyl-5,6,7,8-tetrahydrofolate(in) + H(+)(in) = (6S)-5-methyl-5,6,7,8-tetrahydrofolate(out) + H(+)(out). It carries out the reaction methotrexate(in) + H(+)(in) = methotrexate(out) + H(+)(out). The enzyme catalyses pemetrexed(in) + H(+)(in) = pemetrexed(out) + H(+)(out). Its function is as follows. Proton-coupled folate symporter that mediates folate absorption using an H(+) gradient as a driving force. Involved in the intestinal absorption of folates at the brush-border membrane of the proximal jejunum, and the transport from blood to cerebrospinal fluid across the choroid plexus. Functions at acidic pH via alternate outward- and inward-open conformation states. Protonation of residues in the outward open state primes the protein for transport. Binding of folate promotes breaking of salt bridge network and subsequent closure of the extracellular gate, leading to the inward-open state and release of protons and folate. Also able to transport antifolate drugs, such as methotrexate and pemetrexed. Also acts as a lower-affinity, pH-independent heme carrier protein and constitutes the main importer of heme in the intestine. Imports heme in the retina and retinal pigment epithelium, in neurons of the hippocampus, in hepatocytes and in the renal epithelial cells. The chain is Proton-coupled folate transporter from Xenopus laevis (African clawed frog).